The chain runs to 531 residues: Serine-type carboxypeptidase F (531 aa).

Residues 1 to 25 (MLFRSLLSTAVLAVSLCTDNASAAK) form the signal peptide. N-linked (GlcNAc...) asparagine glycosylation is present at Asn20. Positions 26 to 52 (HGRFGQKARDAMNIAKRSANAVKHSLK) are excised as a propeptide. N-linked (GlcNAc...) asparagine glycosylation is found at Asn63, Asn94, and Asn155. Ser211 is an active-site residue. Asn228, Asn271, Asn309, and Asn378 each carry an N-linked (GlcNAc...) asparagine glycan. Residue Asp430 is part of the active site. Residues Asn436 and Asn444 are each glycosylated (N-linked (GlcNAc...) asparagine). The active site involves His507.

It belongs to the peptidase S10 family. As to quaternary structure, monomer.

With respect to regulation, inhibited by DFP, and Hg(Cl)2. In terms of biological role, removes any amino acid from the C-terminus of a long peptide. Digests preferentially peptides containing a positively charged residue in P1' position, as well as arginine, lysine or phenylalanine in P1 position of ester substrate. Also catalyzes peptide synthesis. The protein is Serine-type carboxypeptidase F (pepF) of Aspergillus niger.